Consider the following 376-residue polypeptide: N,N'-diacetylbacillosaminyl-diphospho-undecaprenol alpha-1,3-N-acetylgalactosaminyltransferase (376 aa).

This sequence belongs to the glycosyltransferase group 1 family.

The catalysed reaction is N,N'-diacetyl-alpha-D-bacillosaminyl-tri-trans,hepta-cis-undecaprenyl diphosphate + UDP-N-acetyl-alpha-D-galactosamine = N-acetyl-alpha-D-galactosaminyl-(1-&gt;3)-N,N'-diacetyl-alpha-D-bacillosaminyl-tri-trans,hepta-cis-undecaprenyl diphosphate + UDP + H(+). The protein operates within protein modification; protein glycosylation. Functionally, adds the first GalNAc residue on to the isoprenoid-linked bacillosamine (2,4-diacetamido-2,4,6-trideoxyglucose) carrier in the N-linked protein glycosylation pathway. Acts first on the undecaprenylpyrophosphate-linked bacillosamine (Und-PP-Bac) substrate to yield the disaccharide. In Campylobacter jejuni subsp. jejuni serotype O:2 (strain ATCC 700819 / NCTC 11168), this protein is N,N'-diacetylbacillosaminyl-diphospho-undecaprenol alpha-1,3-N-acetylgalactosaminyltransferase (pglA).